Consider the following 96-residue polypeptide: RNA-binding protein Hfq (96 aa).

Residues 9–68 enclose the Sm domain; it reads DPYLNALRRERIPVSIYLVNGIKLQGQIESFDQFVILLKNTVNQMVYKHAISTVVPARSV.

Belongs to the Hfq family. As to quaternary structure, homohexamer.

Functionally, RNA chaperone that binds small regulatory RNA (sRNAs) and mRNAs to facilitate mRNA translational regulation in response to envelope stress, environmental stress and changes in metabolite concentrations. Also binds with high specificity to tRNAs. The protein is RNA-binding protein Hfq of Histophilus somni (strain 129Pt) (Haemophilus somnus).